The following is a 348-amino-acid chain: Phenylalanine--tRNA ligase alpha subunit (348 aa).

Glutamate 268 is a binding site for Mg(2+).

The protein belongs to the class-II aminoacyl-tRNA synthetase family. Phe-tRNA synthetase alpha subunit type 1 subfamily. Tetramer of two alpha and two beta subunits. Requires Mg(2+) as cofactor.

Its subcellular location is the cytoplasm. It catalyses the reaction tRNA(Phe) + L-phenylalanine + ATP = L-phenylalanyl-tRNA(Phe) + AMP + diphosphate + H(+). In Bordetella parapertussis (strain 12822 / ATCC BAA-587 / NCTC 13253), this protein is Phenylalanine--tRNA ligase alpha subunit.